A 113-amino-acid chain; its full sequence is Endoribonuclease SymE (113 aa).

In terms of domain architecture, SpoVT-AbrB spans 29–74; the sequence is SRYPDYSRIPAITLKGQWLEAAGFATGTVVDVKVMEGCIVLTAQPP.

Belongs to the SymE family.

Its subcellular location is the cytoplasm. Functionally, involved in the degradation and recycling of damaged RNA. It is itself a target for degradation by the ATP-dependent protease Lon. The chain is Endoribonuclease SymE from Escherichia coli (strain 55989 / EAEC).